The sequence spans 295 residues: Tetrahydromethanopterin S-methyltransferase subunit E (295 aa).

7 helical membrane passes run 4 to 24 (MITG…AGAA), 60 to 80 (GEPV…FVLM), 87 to 107 (VIMA…TYAV), 140 to 160 (GFIV…PIPG), 161 to 181 (FAHP…IGAI), 234 to 254 (YGGP…FWNT), and 255 to 275 (IVFG…LLII).

The protein belongs to the MtrE family. As to quaternary structure, the complex is composed of 8 subunits; MtrA, MtrB, MtrC, MtrD, MtrE, MtrF, MtrG and MtrH.

It is found in the cell membrane. The catalysed reaction is 5-methyl-5,6,7,8-tetrahydromethanopterin + coenzyme M + 2 Na(+)(in) = 5,6,7,8-tetrahydromethanopterin + methyl-coenzyme M + 2 Na(+)(out). The protein operates within one-carbon metabolism; methanogenesis from CO(2); methyl-coenzyme M from 5,10-methylene-5,6,7,8-tetrahydromethanopterin: step 2/2. Part of a complex that catalyzes the formation of methyl-coenzyme M and tetrahydromethanopterin from coenzyme M and methyl-tetrahydromethanopterin. This is an energy-conserving, sodium-ion translocating step. This chain is Tetrahydromethanopterin S-methyltransferase subunit E, found in Methanothermobacter marburgensis (strain ATCC BAA-927 / DSM 2133 / JCM 14651 / NBRC 100331 / OCM 82 / Marburg) (Methanobacterium thermoautotrophicum).